A 173-amino-acid polypeptide reads, in one-letter code: Protein tyrosine phosphatase type IVA 1 (173 aa).

Residues 8–161 (APVEVTYKNM…YRPKMRLRFK (154 aa)) enclose the Tyrosine-protein phosphatase domain. A disulfide bridge links Cys-49 with Cys-104. Asp-72 (proton donor) is an active-site residue. Positions 97–132 (GCCIAVHCVAGLGRAPVLVALALIEGGMKYEDAVQF) are interaction with ATF5. Cys-104 (phosphocysteine intermediate) is an active-site residue. 105–110 (VAGLGR) provides a ligand contact to phosphate. Arg-110 provides a ligand contact to substrate. Cys-170 bears the Cysteine methyl ester mark. The S-farnesyl cysteine moiety is linked to residue Cys-170. Positions 171 to 173 (CIQ) are cleaved as a propeptide — removed in mature form.

The protein belongs to the protein-tyrosine phosphatase family. As to quaternary structure, homotrimer. Interacts with ATF5 and tubulin. Farnesylated. Farnesylation is required for membrane targeting.

It is found in the cell membrane. The protein resides in the early endosome. Its subcellular location is the endoplasmic reticulum. It localises to the cytoplasm. The protein localises to the cytoskeleton. It is found in the spindle. The protein resides in the nucleus. It catalyses the reaction O-phospho-L-tyrosyl-[protein] + H2O = L-tyrosyl-[protein] + phosphate. With respect to regulation, inhibited by sodium orthovanadate and pentamidine. In terms of biological role, protein tyrosine phosphatase which stimulates progression from G1 into S phase during mitosis. May play a role in the development and maintenance of differentiating epithelial tissues. In Pongo abelii (Sumatran orangutan), this protein is Protein tyrosine phosphatase type IVA 1 (PTP4A1).